The chain runs to 81 residues: Sulfur carrier protein TusA (81 aa).

The Cysteine persulfide intermediate role is filled by Cys-19.

This sequence belongs to the sulfur carrier protein TusA family. Interacts with IscS.

The protein localises to the cytoplasm. It participates in tRNA modification. Functionally, sulfur carrier protein involved in sulfur trafficking in the cell. Part of a sulfur-relay system required for 2-thiolation during synthesis of 2-thiouridine of the modified wobble base 5-methylaminomethyl-2-thiouridine (mnm(5)s(2)U) in tRNA. Interacts with IscS and stimulates its cysteine desulfurase activity. Accepts an activated sulfur from IscS, which is then transferred to TusD, and thus determines the direction of sulfur flow from IscS to 2-thiouridine formation. Also appears to be involved in sulfur transfer for the biosynthesis of molybdopterin. This Shigella boydii serotype 18 (strain CDC 3083-94 / BS512) protein is Sulfur carrier protein TusA.